A 186-amino-acid chain; its full sequence is Lumazine protein (186 aa).

Lumazine-binding repeat units lie at residues 1 to 96 (MFRG…VGRG) and 97 to 186 (GLTG…LNEW).

Requires 6,7-dimethyl-8-(1-D-ribityl)lumazine as cofactor.

Antenna protein that modulates the color of the bioluminescence emission of the luciferase. In the presence of LumP, luciferase emission is shifted to higher energy values (shorter wavelength). In Photobacterium leiognathi, this protein is Lumazine protein (lumP).